A 321-amino-acid polypeptide reads, in one-letter code: MSRPERLQPGVKLRDADKVSRIPVKVVPSERETMLRKPDWLRVKLPSSSQRIDEIKQALRSNGLHSVCEEASCPNLAECFNHGTATFMILGAICTRRCPFCDVAHGRPLKPDAQEPKKLAQTIKDMKLKYVVITSVDRDDLRDGGAQHFADCIREIRLLNPEIKIETLVPDFRGRIDAALDILATEPPDVFNHNLETAPMHYRKARPGANYQWSLDLLKKFKERHPDVPTKSGLMMGLGETNEEIAQVLKDLRAHNVEMLTLGQYLQPSKFHLPVERYVPPAEFDELRVFAEEIGFTHAACGPMVRSSYHADLQAQGKEVK.

The [4Fe-4S] cluster site is built by C68, C73, C79, C94, C98, C101, and S308. The 218-residue stretch at 80–297 (FNHGTATFMI…RVFAEEIGFT (218 aa)) folds into the Radical SAM core domain.

The protein belongs to the radical SAM superfamily. Lipoyl synthase family. It depends on [4Fe-4S] cluster as a cofactor.

Its subcellular location is the cytoplasm. It catalyses the reaction [[Fe-S] cluster scaffold protein carrying a second [4Fe-4S](2+) cluster] + N(6)-octanoyl-L-lysyl-[protein] + 2 oxidized [2Fe-2S]-[ferredoxin] + 2 S-adenosyl-L-methionine + 4 H(+) = [[Fe-S] cluster scaffold protein] + N(6)-[(R)-dihydrolipoyl]-L-lysyl-[protein] + 4 Fe(3+) + 2 hydrogen sulfide + 2 5'-deoxyadenosine + 2 L-methionine + 2 reduced [2Fe-2S]-[ferredoxin]. It participates in protein modification; protein lipoylation via endogenous pathway; protein N(6)-(lipoyl)lysine from octanoyl-[acyl-carrier-protein]: step 2/2. Catalyzes the radical-mediated insertion of two sulfur atoms into the C-6 and C-8 positions of the octanoyl moiety bound to the lipoyl domains of lipoate-dependent enzymes, thereby converting the octanoylated domains into lipoylated derivatives. The sequence is that of Lipoyl synthase from Shewanella woodyi (strain ATCC 51908 / MS32).